Here is a 167-residue protein sequence, read N- to C-terminus: NAD(P)H-quinone oxidoreductase subunit I, chloroplastic (167 aa).

4Fe-4S ferredoxin-type domains are found at residues Gly55–Lys84 and Leu95–Glu124. [4Fe-4S] cluster is bound by residues Cys64, Cys67, Cys70, Cys74, Cys104, Cys107, Cys110, and Cys114.

It belongs to the complex I 23 kDa subunit family. In terms of assembly, NDH is composed of at least 16 different subunits, 5 of which are encoded in the nucleus. It depends on [4Fe-4S] cluster as a cofactor.

It is found in the plastid. The protein resides in the chloroplast thylakoid membrane. The catalysed reaction is a plastoquinone + NADH + (n+1) H(+)(in) = a plastoquinol + NAD(+) + n H(+)(out). The enzyme catalyses a plastoquinone + NADPH + (n+1) H(+)(in) = a plastoquinol + NADP(+) + n H(+)(out). Functionally, NDH shuttles electrons from NAD(P)H:plastoquinone, via FMN and iron-sulfur (Fe-S) centers, to quinones in the photosynthetic chain and possibly in a chloroplast respiratory chain. The immediate electron acceptor for the enzyme in this species is believed to be plastoquinone. Couples the redox reaction to proton translocation, and thus conserves the redox energy in a proton gradient. The protein is NAD(P)H-quinone oxidoreductase subunit I, chloroplastic of Pelargonium hortorum (Common geranium).